Here is a 218-residue protein sequence, read N- to C-terminus: Pyrrolidone-carboxylate peptidase (218 aa).

Residues glutamate 81, cysteine 144, and histidine 169 contribute to the active site.

Belongs to the peptidase C15 family. As to quaternary structure, homotetramer.

The protein resides in the cytoplasm. The catalysed reaction is Release of an N-terminal pyroglutamyl group from a polypeptide, the second amino acid generally not being Pro.. Its function is as follows. Removes 5-oxoproline from various penultimate amino acid residues except L-proline. In Deinococcus radiodurans (strain ATCC 13939 / DSM 20539 / JCM 16871 / CCUG 27074 / LMG 4051 / NBRC 15346 / NCIMB 9279 / VKM B-1422 / R1), this protein is Pyrrolidone-carboxylate peptidase (pcp).